The chain runs to 196 residues: Probable malonic semialdehyde reductase RutE (196 aa).

The protein belongs to the nitroreductase family. HadB/RutE subfamily. The cofactor is FMN.

It catalyses the reaction 3-hydroxypropanoate + NADP(+) = 3-oxopropanoate + NADPH + H(+). In terms of biological role, may reduce toxic product malonic semialdehyde to 3-hydroxypropionic acid, which is excreted. In Escherichia coli O8 (strain IAI1), this protein is Probable malonic semialdehyde reductase RutE.